The following is a 260-amino-acid chain: Cytosolic Fe-S cluster assembly factor Nubp2 homolog 2 (260 aa).

Gly-14–Ser-21 is an ATP binding site. [4Fe-4S] cluster-binding residues include Cys-188 and Cys-191.

This sequence belongs to the Mrp/NBP35 ATP-binding proteins family. NUBP2/CFD1 subfamily. As to quaternary structure, heterotetramer of 2 Nubp1 and 2 Nubp2 chains. Requires [4Fe-4S] cluster as cofactor.

Its subcellular location is the cytoplasm. Component of the cytosolic iron-sulfur (Fe/S) protein assembly (CIA) machinery. Required for maturation of extramitochondrial Fe-S proteins. The Nubp1-Nubp2 heterotetramer forms a Fe-S scaffold complex, mediating the de novo assembly of an Fe-S cluster and its transfer to target apoproteins. The protein is Cytosolic Fe-S cluster assembly factor Nubp2 homolog 2 of Drosophila yakuba (Fruit fly).